We begin with the raw amino-acid sequence, 802 residues long: Post-transcriptional regulator mkt1 (802 aa).

Phosphoserine is present on residues Ser227, Ser228, and Ser230.

The protein belongs to the XPG/RAD2 endonuclease family. Interacts with pab1 binding protein ath1.

In terms of biological role, involved in post-transcriptional regulation of gene expression by 3'-UTR-mediated RNA regulation. Promotes interactions between mRNA and poly(A)-binding protein. Binds the 3' UTR of mRNAs, centromeric transcripts and antisense-rDNA. Required for the establishment but not the maintenance of heterochromatin at pericentromeres, and for the maintenance of small domains of facultative heterochromatin known as HOODs. The sequence is that of Post-transcriptional regulator mkt1 from Schizosaccharomyces pombe (strain 972 / ATCC 24843) (Fission yeast).